A 502-amino-acid chain; its full sequence is Betaine aldehyde dehydrogenase, chloroplastic (502 aa).

The N-terminal 7 residues, 1–7, are a transit peptide targeting the chloroplast; sequence MAFPIPA. Position 240 to 245 (240 to 245) interacts with NAD(+); sequence GSSATG. The active-site Proton acceptor is glutamate 262. Cysteine 296 functions as the Nucleophile in the catalytic mechanism.

It belongs to the aldehyde dehydrogenase family. Homodimer.

Its subcellular location is the plastid. The protein resides in the chloroplast. It carries out the reaction betaine aldehyde + NAD(+) + H2O = glycine betaine + NADH + 2 H(+). Its pathway is amine and polyamine biosynthesis; betaine biosynthesis via choline pathway; betaine from betaine aldehyde: step 1/1. The polypeptide is Betaine aldehyde dehydrogenase, chloroplastic (Atriplex hortensis (Mountain spinach)).